The chain runs to 282 residues: D-arabinitol 2-dehydrogenase [ribulose-forming] (282 aa).

NADP(+) is bound by residues Leu32 and Asn53. The active-site Proton donor is Ser170. Residues Tyr185, Lys189, Ile218, and Thr220 each contribute to the NADP(+) site. Tyr185 acts as the Proton acceptor in catalysis. Residue Lys189 is the Lowers pKa of active site Tyr of the active site.

This sequence belongs to the short-chain dehydrogenases/reductases (SDR) family.

The catalysed reaction is D-arabinitol + NAD(+) = D-ribulose + NADH + H(+). Its pathway is carbohydrate metabolism; D-arabinitol metabolism. Its function is as follows. Catalyzes the NAD(+)-dependent oxidation of D-arabinitol at carbon 4 to produce D-ribulose. The chain is D-arabinitol 2-dehydrogenase [ribulose-forming] (ARD) from Candida tropicalis (Yeast).